The following is a 151-amino-acid chain: Ribosome maturation factor RimP (151 aa).

This sequence belongs to the RimP family.

The protein localises to the cytoplasm. In terms of biological role, required for maturation of 30S ribosomal subunits. This chain is Ribosome maturation factor RimP, found in Haemophilus influenzae (strain PittEE).